A 121-amino-acid chain; its full sequence is Small ribosomal subunit protein bS6m (121 aa).

This sequence belongs to the bacterial ribosomal protein bS6 family. In terms of assembly, component of the mitochondrial ribosome small subunit (28S) which comprises a 12S rRNA and about 30 distinct proteins.

The protein localises to the mitochondrion. The chain is Small ribosomal subunit protein bS6m (MRPS6) from Gallus gallus (Chicken).